The chain runs to 129 residues: Large ribosomal subunit protein bL20 (129 aa).

Belongs to the bacterial ribosomal protein bL20 family.

Its function is as follows. Binds directly to 23S ribosomal RNA and is necessary for the in vitro assembly process of the 50S ribosomal subunit. It is not involved in the protein synthesizing functions of that subunit. This is Large ribosomal subunit protein bL20 from Mycobacterium leprae (strain Br4923).